A 116-amino-acid chain; its full sequence is uncharacterized protein (116 aa).

Topologically, residues 1-46 are extracellular; the sequence is MGDNTTVAPGTNQTLVEEDLGAQITHTLMVQIMSKLNEMLTEYQPQ. Asparagine 4 and asparagine 12 each carry an N-linked (GlcNAc...) asparagine; by host glycan. Residues 47 to 67 form a helical membrane-spanning segment; that stretch reads IIGIGATVLAIFVIMFISLLI. Topologically, residues 68–116 are cytoplasmic; the sequence is ILGCNCIRPYNFKNLKRYITGKASKSVEYQPLKMSAVNMGMDEDDEFLA.

The protein resides in the host membrane. This is an uncharacterized protein from Magallana gigas (Pacific oyster).